We begin with the raw amino-acid sequence, 331 residues long: Leucine-rich repeat-containing protein 26 (331 aa).

Positions 1–26 (MRGSFFSRLPPQLSLLLLLSLRRVWT) are cleaved as a signal peptide. Residues 27–261 (QEDIGTAPSK…QCTQSLAARD (235 aa)) lie on the Extracellular side of the membrane. An LRRNT domain is found at 34–71 (PSKSPVAPECPEACSCSLGGKANCSALALPAVPADLSW). 2 cysteine pairs are disulfide-bonded: C43-C49 and C47-C57. 5 LRR repeats span residues 72–93 (QVRS…AFAN), 96–117 (ALLY…AFWG), 120–141 (VLQW…TFAP), 144–165 (ALSF…ILGP), and 168–191 (LLRV…NNLP). In terms of domain architecture, LRRCT spans 201–255 (NPWTCNCALRPLCTWLRKHPRPASETETLLCVSPRLQTLSLLTAFPDAAFKQCTQ). Cystine bridges form between C205-C231 and C207-C253. A helical transmembrane segment spans residues 262 to 282 (LAVVYALGPVSFLASLAICLA). Topologically, residues 283 to 331 (LGSVLTACGARRRRRRRTTVRHLLRRQLDPEGPPSLEDAGSPVTAAIQA) are cytoplasmic. The tract at residues 310–331 (LDPEGPPSLEDAGSPVTAAIQA) is disordered.

Interacts with KCNMA1.

The protein resides in the cell membrane. The protein localises to the cytoplasm. Its subcellular location is the cytoskeleton. Auxiliary protein of the large-conductance, voltage and calcium-activated potassium channel (BK alpha). Required for the conversion of BK alpha channels from a high-voltage to a low-voltage activated channel type in non-excitable cells. These are characterized by negative membrane voltages and constant low levels of calcium. The protein is Leucine-rich repeat-containing protein 26 (Lrrc26) of Mus musculus (Mouse).